Here is a 243-residue protein sequence, read N- to C-terminus: Uridylate kinase (243 aa).

18–21 (KLGG) lines the ATP pocket. Gly59 serves as a coordination point for UMP. ATP is bound by residues Gly60 and Arg64. Residues Asp79 and 140–147 (MGMPYFST) contribute to the UMP site. Positions 173 and 176 each coordinate ATP.

This sequence belongs to the UMP kinase family. Homohexamer.

The protein resides in the cytoplasm. The catalysed reaction is UMP + ATP = UDP + ADP. Its pathway is pyrimidine metabolism; CTP biosynthesis via de novo pathway; UDP from UMP (UMPK route): step 1/1. Its activity is regulated as follows. Inhibited by UTP. In terms of biological role, catalyzes the reversible phosphorylation of UMP to UDP. This chain is Uridylate kinase, found in Corynebacterium glutamicum (strain R).